The following is a 211-amino-acid chain: Protein-L-isoaspartate O-methyltransferase (211 aa).

The active site involves S60.

The protein belongs to the methyltransferase superfamily. L-isoaspartyl/D-aspartyl protein methyltransferase family.

Its subcellular location is the cytoplasm. The enzyme catalyses [protein]-L-isoaspartate + S-adenosyl-L-methionine = [protein]-L-isoaspartate alpha-methyl ester + S-adenosyl-L-homocysteine. Its function is as follows. Catalyzes the methyl esterification of L-isoaspartyl residues in peptides and proteins that result from spontaneous decomposition of normal L-aspartyl and L-asparaginyl residues. It plays a role in the repair and/or degradation of damaged proteins. The sequence is that of Protein-L-isoaspartate O-methyltransferase from Pseudomonas syringae pv. tomato (strain ATCC BAA-871 / DC3000).